The following is a 308-amino-acid chain: Aspartate carbamoyltransferase catalytic subunit (308 aa).

Residues arginine 57 and threonine 58 each contribute to the carbamoyl phosphate site. Lysine 86 serves as a coordination point for L-aspartate. 3 residues coordinate carbamoyl phosphate: arginine 107, histidine 135, and glutamine 138. 2 residues coordinate L-aspartate: arginine 168 and arginine 229. Carbamoyl phosphate-binding residues include leucine 268 and proline 269.

The protein belongs to the aspartate/ornithine carbamoyltransferase superfamily. ATCase family. Heterooligomer of catalytic and regulatory chains.

It carries out the reaction carbamoyl phosphate + L-aspartate = N-carbamoyl-L-aspartate + phosphate + H(+). It functions in the pathway pyrimidine metabolism; UMP biosynthesis via de novo pathway; (S)-dihydroorotate from bicarbonate: step 2/3. Functionally, catalyzes the condensation of carbamoyl phosphate and aspartate to form carbamoyl aspartate and inorganic phosphate, the committed step in the de novo pyrimidine nucleotide biosynthesis pathway. In Pyrococcus abyssi (strain GE5 / Orsay), this protein is Aspartate carbamoyltransferase catalytic subunit.